We begin with the raw amino-acid sequence, 1178 residues long: Ubiquitin carboxyl-terminal hydrolase cyk-3 (1178 aa).

3 EF-hand domains span residues 28 to 60 (EEYR…GAQI), 175 to 210 (FPDS…LCRG), and 211 to 246 (PLPG…LNVP). Residues Asp-188, Asn-190, Asp-192, Gln-194, Glu-199, Asp-224, Asp-226, Asp-228, and Glu-235 each contribute to the Ca(2+) site. Positions 296–410 (ESRKMELQIV…VDSQFTRKYL (115 aa)) constitute a DUSP domain. The region spanning 570–1175 (VGLVNYGNFC…GAYLLFYERK (606 aa)) is the USP domain. Cys-579 serves as the catalytic Nucleophile. The interval 681–725 (SNKSLHPSPEESEGTDSNKLSDSSKKKEADKEEADEEKAERSWTE) is disordered. The active-site Proton acceptor is the His-1134.

The protein belongs to the peptidase C19 family. Expressed in excretory cells, coelomocytes, head neurons, hypodermal cells, germ cells, oocytes, sperm and pharynx (at protein level).

It localises to the nucleus. The protein localises to the cytoplasm. The protein resides in the cytoskeleton. It is found in the microtubule organizing center. The enzyme catalyses Thiol-dependent hydrolysis of ester, thioester, amide, peptide and isopeptide bonds formed by the C-terminal Gly of ubiquitin (a 76-residue protein attached to proteins as an intracellular targeting signal).. In terms of biological role, ubiquitin-protein hydrolase which cleaves ubiquitin from ubiquitinated proteins. Plays a role in embryo osmoregulation. Probably by regulating osmosis, controls actin redistribution in the 1-cell embryos and thus actin-dependent processes such as cytokinesis and P-granules segregation. During the first embryonic mitotic division, involved in the formation of a functional microtubule organizing center provided by the male pronucleus. Acts as a positive regulator of the mTORC1 signaling. The chain is Ubiquitin carboxyl-terminal hydrolase cyk-3 from Caenorhabditis elegans.